Reading from the N-terminus, the 327-residue chain is Zinc transport protein ZntB (327 aa).

The Cytoplasmic portion of the chain corresponds to 1–271 (MDVVAGKALQ…AMNRRTYTMS (271 aa)). Residues 272–292 (LLAMVFLPTTFLTGLFGVNLG) traverse the membrane as a helical segment. The Periplasmic portion of the chain corresponds to 293 to 300 (GIPGNTDS). The chain crosses the membrane as a helical span at residues 301 to 321 (FGFATFCMMLVVLVLGVAWWL). At 322–327 (KHSKWL) the chain is on the cytoplasmic side.

It belongs to the CorA metal ion transporter (MIT) (TC 1.A.35) family.

It localises to the cell inner membrane. The enzyme catalyses Zn(2+)(out) + H(+)(out) = Zn(2+)(in) + H(+)(in). Its function is as follows. Zinc transporter. Acts as a Zn(2+):proton symporter, which likely mediates zinc ion uptake. The protein is Zinc transport protein ZntB of Yersinia enterocolitica serotype O:8 / biotype 1B (strain NCTC 13174 / 8081).